Here is a 251-residue protein sequence, read N- to C-terminus: tRNA (guanine-N(1)-)-methyltransferase (251 aa).

Residues glycine 111 and 131 to 136 contribute to the S-adenosyl-L-methionine site; that span reads LGDFVL.

Belongs to the RNA methyltransferase TrmD family. In terms of assembly, homodimer.

Its subcellular location is the cytoplasm. The enzyme catalyses guanosine(37) in tRNA + S-adenosyl-L-methionine = N(1)-methylguanosine(37) in tRNA + S-adenosyl-L-homocysteine + H(+). In terms of biological role, specifically methylates guanosine-37 in various tRNAs. This chain is tRNA (guanine-N(1)-)-methyltransferase, found in Synechococcus sp. (strain JA-2-3B'a(2-13)) (Cyanobacteria bacterium Yellowstone B-Prime).